Here is a 398-residue protein sequence, read N- to C-terminus: Na(+)/H(+) antiporter NhaA (398 aa).

The next 12 membrane-spanning stretches (helical) occupy residues 9–29 (MITHPAAGGVLLFAAALAAIV), 57–77 (LSLLVLVNDGLMAVFFLAVGL), 95–115 (AFPAIAALGGMVAPAVIYSLM), 124–144 (AGWAIPAATDIAFAVGVLALL), 154–174 (VFMLALAIIDDLGAIVIIALF), 177–197 (TALEPLALAAAGAVIGIMALM), 204–224 (FLSLYLLLGAVLWGCILLSGI), 226–246 (ATLAGVVVGGLIPLTLPSTEV), 255–275 (WLQPWVVYLILPLFAFANAGI), 288–308 (FLPLGIAAGLVVGKPLGIVLF), 329–349 (IAAAAMLCGIGFTMSIFIANL), and 359–379 (IVLAKVGILSGSVIAALLGYL).

The protein belongs to the NhaA Na(+)/H(+) (TC 2.A.33) antiporter family.

The protein resides in the cell inner membrane. It catalyses the reaction Na(+)(in) + 2 H(+)(out) = Na(+)(out) + 2 H(+)(in). Its function is as follows. Na(+)/H(+) antiporter that extrudes sodium in exchange for external protons. The sequence is that of Na(+)/H(+) antiporter NhaA from Sodalis glossinidius (strain morsitans).